Reading from the N-terminus, the 144-residue chain is Vasopressin-neurophysin 2-copeptin (144 aa).

Cys1 and Cys6 are disulfide-bonded. Glycine amide is present on Gly9. 7 cysteine pairs are disulfide-bonded: Cys22-Cys66, Cys25-Cys39, Cys33-Cys56, Cys40-Cys46, Cys73-Cys85, Cys79-Cys97, and Cys86-Cys91. N-linked (GlcNAc...) asparagine glycosylation is present at Asn112.

Belongs to the vasopressin/oxytocin family. As to quaternary structure, interacts with vasopressin receptors V1bR/AVPR1B (Ki=85 pM), V1aR/AVPR1A (Ki=0.6 nM) and V2R/AVPR2 (Ki=4.9 nM). Interacts with oxytocin receptor (OXTR) (Ki=110 nM).

The protein resides in the secreted. In terms of biological role, neurophysin 2 specifically binds vasopressin. Its function is as follows. Vasopressin has a direct antidiuretic action on the kidney, it also causes vasoconstriction of the peripheral vessels. Acts by binding to vasopressin receptors (V1bR/AVPR1B, V1aR/AVPR1A, and V2R/AVPR2). This chain is Vasopressin-neurophysin 2-copeptin (AVP), found in Cavia porcellus (Guinea pig).